We begin with the raw amino-acid sequence, 562 residues long: Glutamine--tRNA ligase (562 aa).

The 'HIGH' region motif lies at 35-45 (PEPNGYLHIGH). ATP-binding positions include 36 to 38 (EPN) and 42 to 48 (HIGHAKS). L-glutamine-binding residues include Asp-68 and Tyr-213. Residues Thr-232 and 264–265 (RL) each bind ATP. The 'KMSKS' region motif lies at 271-275 (ITSKR).

It belongs to the class-I aminoacyl-tRNA synthetase family. As to quaternary structure, monomer.

The protein localises to the cytoplasm. The enzyme catalyses tRNA(Gln) + L-glutamine + ATP = L-glutaminyl-tRNA(Gln) + AMP + diphosphate. In Neisseria meningitidis serogroup A / serotype 4A (strain DSM 15465 / Z2491), this protein is Glutamine--tRNA ligase.